The primary structure comprises 635 residues: Threonine--tRNA ligase (635 aa).

In terms of domain architecture, TGS spans 1–61; it reads MIKITLKDGK…HKDSSLEILT (61 aa). Positions 242 to 532 are catalytic; that stretch reads DHRKLGKELD…LIEQYAGAFP (291 aa). Zn(2+) is bound by residues Cys333, His384, and His509.

This sequence belongs to the class-II aminoacyl-tRNA synthetase family. Homodimer. Zn(2+) serves as cofactor.

Its subcellular location is the cytoplasm. The catalysed reaction is tRNA(Thr) + L-threonine + ATP = L-threonyl-tRNA(Thr) + AMP + diphosphate + H(+). Functionally, catalyzes the attachment of threonine to tRNA(Thr) in a two-step reaction: L-threonine is first activated by ATP to form Thr-AMP and then transferred to the acceptor end of tRNA(Thr). Also edits incorrectly charged L-seryl-tRNA(Thr). This is Threonine--tRNA ligase from Clostridium botulinum (strain 657 / Type Ba4).